Here is a 755-residue protein sequence, read N- to C-terminus: 1,4-alpha-glucan branching enzyme GlgB (755 aa).

The Nucleophile role is filled by D431. The Proton donor role is filled by E484.

Belongs to the glycosyl hydrolase 13 family. GlgB subfamily. Monomer.

The enzyme catalyses Transfers a segment of a (1-&gt;4)-alpha-D-glucan chain to a primary hydroxy group in a similar glucan chain.. It participates in glycan biosynthesis; glycogen biosynthesis. Its function is as follows. Catalyzes the formation of the alpha-1,6-glucosidic linkages in glycogen by scission of a 1,4-alpha-linked oligosaccharide from growing alpha-1,4-glucan chains and the subsequent attachment of the oligosaccharide to the alpha-1,6 position. The polypeptide is 1,4-alpha-glucan branching enzyme GlgB (Prochlorococcus marinus (strain NATL1A)).